The sequence spans 362 residues: Ferredoxin--NADP reductase, leaf isozyme 1, chloroplastic (362 aa).

The N-terminal 62 residues, 1 to 62, are a transit peptide targeting the chloroplast; it reads MAAVTAAAVS…DAAAVAAAPA (62 aa). An FAD-binding FR-type domain is found at 83 to 205; the sequence is KEPYVGKCLL…TGPVGKEMLM (123 aa). Residues 141 to 144, 162 to 164, Tyr-168, 179 to 181, and Thr-220 contribute to the FAD site; these read RLYS, CVK, and VCS. 2 residues coordinate NADP(+): Ser-144 and Lys-164. A disulfide bond links Cys-180 and Cys-185. Residue Ser-181 is modified to Phosphoserine. NADP(+) is bound by residues Thr-220, 252–253, 282–283, Lys-292, 321–322, and Glu-360; these read VP, SR, and GL.

This sequence belongs to the ferredoxin--NADP reductase type 1 family. In terms of assembly, component of high molecular weight thylakoid LFNRs-containing protein complexes containing LIR1, LFNR1, LFNR2, TIC62 and TROL proteins. Interacts directly with LIR1 and TIC62; LIR1 increases the affinity of LFNR1 and LFNR2 for TIC62. It depends on FAD as a cofactor. May form interchain disulfide bonds with LIR1.

The protein resides in the plastid. Its subcellular location is the chloroplast stroma. The protein localises to the chloroplast thylakoid membrane. The enzyme catalyses 2 reduced [2Fe-2S]-[ferredoxin] + NADP(+) + H(+) = 2 oxidized [2Fe-2S]-[ferredoxin] + NADPH. Its pathway is energy metabolism; photosynthesis. Its function is as follows. May play a key role in regulating the relative amounts of cyclic and non-cyclic electron flow to meet the demands of the plant for ATP and reducing power. The chain is Ferredoxin--NADP reductase, leaf isozyme 1, chloroplastic from Oryza sativa subsp. japonica (Rice).